The primary structure comprises 220 residues: Octanoyltransferase (220 aa).

The BPL/LPL catalytic domain maps to 27–208; sequence PGTADEIWLC…QLARAHGQAV (182 aa). Substrate is bound by residues 66–73, 139–141, and 152–154; these read RGGQVTYH, ALG, and GLA. Catalysis depends on cysteine 170, which acts as the Acyl-thioester intermediate.

This sequence belongs to the LipB family.

Its subcellular location is the cytoplasm. It catalyses the reaction octanoyl-[ACP] + L-lysyl-[protein] = N(6)-octanoyl-L-lysyl-[protein] + holo-[ACP] + H(+). Its pathway is protein modification; protein lipoylation via endogenous pathway; protein N(6)-(lipoyl)lysine from octanoyl-[acyl-carrier-protein]: step 1/2. In terms of biological role, catalyzes the transfer of endogenously produced octanoic acid from octanoyl-acyl-carrier-protein onto the lipoyl domains of lipoate-dependent enzymes. Lipoyl-ACP can also act as a substrate although octanoyl-ACP is likely to be the physiological substrate. The chain is Octanoyltransferase from Bordetella pertussis (strain Tohama I / ATCC BAA-589 / NCTC 13251).